The sequence spans 725 residues: MTKSSGGGKCPIMHGSMTSEKKTNTHWWPNSLKLEILRQHDTKANPLDEDFNYAEEFKKINLEELKQDLKNFMTDSQEWWPADWGHYGGLMIRMAWHSAGSYRLADGRGGGGTGNQRFAPLNSWPDNVSLDKARRLLWPIKKKYGNKLSWADLFILAGNMAYESMGLKTFGFAGGREDIWHPEEDTYWGSEKEWLAETKNRYSSDEERDSLENPLAAVQMGLIYVNPEGVDGNPDPLRTAKDVRETFKRMAMNDEETCALTAGGHTVGKCHGNGKEENLGPEPEAADVEEQGMGWRNSGGKGVGRDTMSSGIEGAWTTNPTQWDNGYFYLLFNYEWELKKSPAGAWQWEPIDIKEEDKPVDVEDPSIRHNPIMTDADMAMKMDPDYRKIAEKFYKDPEYFADVFARAWFKLTHRDLGPKDRYLGADVPEEDLIWQDPIPKVDYSLSEQEIADLKEKLLNTELTSYELISTAWDSARNFRCSDFRGGANGARIRLAPQKDWHGNEPEKLHKVLRVLEDLQSTLDKKVSLADLIVLGGTAAVEKAAKDAGYNVTVPFAPGRGDATDEQTDVESFEPLEPLHDGYRNYLKKDYAVPAEELMLDRTHLMGLTAPEMTVLVGGMRALGANYGESEHGVFTDRVGTLTNDFFVNLTDMNNVWKKADDHYEVRDRKTDELKWTASRIDLVFGSNSILRSYSELYAQDDNQEKFVKDFVKAWTKVMNADRFDL.

Residues 96–224 (WHSAGSYRLA…LAAVQMGLIY (129 aa)) constitute a cross-link (tryptophyl-tyrosyl-methioninium (Trp-Tyr) (with M-250)). The active-site Proton acceptor is histidine 97. The segment at residues 224–250 (YVNPEGVDGNPDPLRTAKDVRETFKRM) is a cross-link (tryptophyl-tyrosyl-methioninium (Tyr-Met) (with W-96)). Heme b is bound at residue histidine 265.

This sequence belongs to the peroxidase family. Peroxidase/catalase subfamily. Homodimer or homotetramer. It depends on heme b as a cofactor. Formation of the three residue Trp-Tyr-Met cross-link is important for the catalase, but not the peroxidase activity of the enzyme.

It catalyses the reaction H2O2 + AH2 = A + 2 H2O. The catalysed reaction is 2 H2O2 = O2 + 2 H2O. Bifunctional enzyme with both catalase and broad-spectrum peroxidase activity. The polypeptide is Catalase-peroxidase 1 (Idiomarina loihiensis (strain ATCC BAA-735 / DSM 15497 / L2-TR)).